Reading from the N-terminus, the 341-residue chain is Glucokinase (341 aa).

18 to 23 contacts ATP; that stretch reads GDIGGT.

The protein belongs to the bacterial glucokinase family.

It localises to the cytoplasm. The catalysed reaction is D-glucose + ATP = D-glucose 6-phosphate + ADP + H(+). This Mesorhizobium japonicum (strain LMG 29417 / CECT 9101 / MAFF 303099) (Mesorhizobium loti (strain MAFF 303099)) protein is Glucokinase.